The following is a 686-amino-acid chain: Potassium-transporting ATPase ATP-binding subunit (686 aa).

The next 2 helical transmembrane spans lie at 38–58 and 64–84; these read VMFV…KDLV and AAPL…VLFA. The segment at 101–123 is disordered; that stretch reads ALRKMRKETTARRWKDGREERVP. Over residues 107–123 the composition is skewed to basic and acidic residues; the sequence is KETTARRWKDGREERVP. The next 2 membrane-spanning stretches (helical) occupy residues 224–244 and 257–277; these read ILLV…VPLA and VALL…AIGI. Aspartate 308 functions as the 4-aspartylphosphate intermediate in the catalytic mechanism. Residues aspartate 345, glutamate 349, 378–385, and lysine 399 contribute to the ATP site; that span reads FTAQTRMS. Residues aspartate 522 and aspartate 526 each contribute to the Mg(2+) site. Helical transmembrane passes span 592–612, 620–640, and 666–686; these read FAIL…LNVM, AVLS…PLAL, and VIVP…VGLA.

This sequence belongs to the cation transport ATPase (P-type) (TC 3.A.3) family. Type IA subfamily. As to quaternary structure, the system is composed of three essential subunits: KdpA, KdpB and KdpC.

It localises to the cell membrane. The catalysed reaction is K(+)(out) + ATP + H2O = K(+)(in) + ADP + phosphate + H(+). Part of the high-affinity ATP-driven potassium transport (or Kdp) system, which catalyzes the hydrolysis of ATP coupled with the electrogenic transport of potassium into the cytoplasm. This subunit is responsible for energy coupling to the transport system and for the release of the potassium ions to the cytoplasm. The chain is Potassium-transporting ATPase ATP-binding subunit from Myxococcus xanthus.